A 116-amino-acid polypeptide reads, in one-letter code: Classical arabinogalactan protein 25 (116 aa).

Residues 1–28 form the signal peptide; that stretch reads MAFSFLNKLLIIFIFIFISLSSSSPTIS. The segment at 40 to 95 is disordered; it reads LLPSPGDALPSDDGSGTIPSSPSPPDPDTNDGSYPDPLAFSPFASPPVSSPSPPPS. Composition is skewed to low complexity over residues 50–59 and 69–82; these read SDDGSGTIPS and NDGSYPDPLAFSPF. Residues 83–95 show a composition bias toward pro residues; it reads ASPPVSSPSPPPS. The GPI-anchor amidated serine moiety is linked to residue S89. A propeptide spans 90–116 (removed in mature form); that stretch reads PSPPPSLPSAGVLLISLIISSASFLAL.

The protein belongs to the classical AGP family. Post-translationally, O-glycosylated on the hydroxyproline residues.

The protein localises to the cell membrane. Its function is as follows. Proteoglycan that seems to be implicated in diverse developmental roles such as differentiation, cell-cell recognition, embryogenesis and programmed cell death. The polypeptide is Classical arabinogalactan protein 25 (AGP25) (Arabidopsis thaliana (Mouse-ear cress)).